Here is a 97-residue protein sequence, read N- to C-terminus: CRISPR-associated endoribonuclease Cas2 1 (97 aa).

Position 12 (Asp12) interacts with Mg(2+).

The protein belongs to the CRISPR-associated endoribonuclease Cas2 protein family. Homodimer, forms a heterotetramer with a Cas1 homodimer. Mg(2+) is required as a cofactor.

Its function is as follows. CRISPR (clustered regularly interspaced short palindromic repeat) is an adaptive immune system that provides protection against mobile genetic elements (viruses, transposable elements and conjugative plasmids). CRISPR clusters contain sequences complementary to antecedent mobile elements and target invading nucleic acids. CRISPR clusters are transcribed and processed into CRISPR RNA (crRNA). Functions as a ssRNA-specific endoribonuclease. Involved in the integration of spacer DNA into the CRISPR cassette. In Francisella tularensis subsp. novicida (strain U112), this protein is CRISPR-associated endoribonuclease Cas2 1.